The primary structure comprises 153 residues: Ubiquitin-conjugating enzyme E2 36 (153 aa).

The UBC core domain occupies 5–151 (NLPRRIIKET…AKEWTRLYAS (147 aa)). Residue Cys-89 is the Glycyl thioester intermediate of the active site.

It belongs to the ubiquitin-conjugating enzyme family. As to quaternary structure, interacts with yeast and human Mms2, with the RING domain of RGLG2 and with UEV1A, UEV1B, UEV1C and UEV1D. As to expression, ubiquitously expressed at low level.

It catalyses the reaction S-ubiquitinyl-[E1 ubiquitin-activating enzyme]-L-cysteine + [E2 ubiquitin-conjugating enzyme]-L-cysteine = [E1 ubiquitin-activating enzyme]-L-cysteine + S-ubiquitinyl-[E2 ubiquitin-conjugating enzyme]-L-cysteine.. It functions in the pathway protein modification; protein ubiquitination. Catalyzes the synthesis of non-canonical poly-ubiquitin chains that are linked through 'Lys-63'. This type of poly-ubiquitination does not lead to protein degradation by the proteasome. Mediates transcriptional activation of target genes. Required for postreplication repair of UV-damaged DNA and for adapting root developmental programs to suboptimal availability of iron. The protein is Ubiquitin-conjugating enzyme E2 36 (UBC36) of Arabidopsis thaliana (Mouse-ear cress).